A 307-amino-acid chain; its full sequence is Ribonuclease H2 subunit B (307 aa).

Residue Ala2 is modified to N-acetylalanine. Lys291 is subject to N6-acetyllysine. A Phosphoserine modification is found at Ser292.

The protein belongs to the RNase H2 subunit B family. In terms of assembly, the RNase H2 complex is a heterotrimer composed of the catalytic subunit RNASEH2A and the non-catalytic subunits RNASEH2B and RNASEH2C.

The protein localises to the nucleus. Non catalytic subunit of RNase H2, an endonuclease that specifically degrades the RNA of RNA:DNA hybrids. Participates in DNA replication, possibly by mediating the removal of lagging-strand Okazaki fragment RNA primers during DNA replication. Mediates the excision of single ribonucleotides from DNA:RNA duplexes. This chain is Ribonuclease H2 subunit B (Rnaseh2b), found in Rattus norvegicus (Rat).